The primary structure comprises 182 residues: Triplatin (182 aa).

Positions 1–18 (MKMIIAVTFLGIVTIAFA) are cleaved as a signal peptide. 3 disulfides stabilise this stretch: cysteine 21/cysteine 133, cysteine 55/cysteine 177, and cysteine 88/cysteine 105.

The protein belongs to the calycin superfamily. Triabin family. Expressed in salivary glands.

The protein localises to the secreted. Inhibits platelet aggregation and vasoconstriction through binding to distinct eicosanoids involved in inflammation (acts as a scavenger), and has a role in inhibiting host innate immunity by impairing platelet-assisted formation of neutrophil extracellular traps (NETs). Inhibits platelet aggregation by collagen, and low doses of thromboxane A2 mimetic (TXA2 mimetic), and arachidonic acid (AA) without affecting aggregation induced by ADP, convulxin (GP6 agonist), and PMA. Binds to TXA2, TXB2, prostaglandine H2 mimetic (PGH2 mimetic), PGJ2, and PGF2alpha. Binding is not observed to leukotrienes, AA, and biogenic amines (PGE1, 5(S)-HETE, 12(S)-HETE, 20-HETE, norepinephrine, epinephrine, serotonin, LTC4 and ADP). Induces relaxation of aorta rat previously contracted with TXA2 mimetic. Moreover, it also impairs platelet-assisted formation of neutrophil extracellular traps (NETs). NETs are web-like structures of DNA and proteins that play an important role in killing of pathogens. In addition, NETs are implicated in thrombus formation. In vivo, this protein exhibits antithrombotic activity in two distinct mice models that are highly dependent on platelets. It is noteworthy that it inhibits thrombosis without promoting excessive bleeding. This Triatoma infestans (Assassin bug) protein is Triplatin.